Reading from the N-terminus, the 347-residue chain is NADH-ubiquinone oxidoreductase chain 2 (347 aa).

Helical transmembrane passes span 3 to 23, 25 to 45, 66 to 86, 96 to 116, 122 to 142, 149 to 169, 178 to 198, 201 to 221, 237 to 257, 274 to 294, and 323 to 343; these read PPILIIIMATIMTGTMIVMLS, HWLLIWIGFEMNMLAVIPVLM, ASMLLMMGVTINLLYSGQWVV, IMMTIALTMKLGLSPFHFWVP, ITLTSGMILLTWQKIAPMSVL, INTNLLMLVALVSVLVGGWGG, IMAYSSIAHMGWMAAIIIYNP, MILNLVLYILMTLSTFMLFML, FPLITSIILILMLSLGGLPPL, NMIIIPTLMAITALLNLYFYL, and TILLPPLIITSTMLLPLTPML.

It belongs to the complex I subunit 2 family. Core subunit of respiratory chain NADH dehydrogenase (Complex I) which is composed of 45 different subunits. Interacts with TMEM242.

Its subcellular location is the mitochondrion inner membrane. The enzyme catalyses a ubiquinone + NADH + 5 H(+)(in) = a ubiquinol + NAD(+) + 4 H(+)(out). Its function is as follows. Core subunit of the mitochondrial membrane respiratory chain NADH dehydrogenase (Complex I) which catalyzes electron transfer from NADH through the respiratory chain, using ubiquinone as an electron acceptor. Essential for the catalytic activity and assembly of complex I. The protein is NADH-ubiquinone oxidoreductase chain 2 of Canis rufus (Red wolf).